Reading from the N-terminus, the 480-residue chain is Serralysin (480 aa).

Histidine 181 provides a ligand contact to Zn(2+). Glutamate 182 is a catalytic residue. Zn(2+) contacts are provided by histidine 185 and histidine 191. Residues arginine 260, aspartate 263, aspartate 292, glycine 294, glycine 295, aspartate 297, threonine 334, and glutamate 336 each coordinate Ca(2+). 2 Hemolysin-type calcium-binding repeats span residues 339-356 (IGGS…ANTL) and 357-374 (KGGA…ADNL).

This sequence belongs to the peptidase M10B family. Zn(2+) is required as a cofactor. It depends on Ca(2+) as a cofactor.

It is found in the secreted. The catalysed reaction is Preferential cleavage of bonds with hydrophobic residues in P1'.. The sequence is that of Serralysin (prtA) from Photorhabdus laumondii subsp. laumondii (strain DSM 15139 / CIP 105565 / TT01) (Photorhabdus luminescens subsp. laumondii).